We begin with the raw amino-acid sequence, 307 residues long: uncharacterized protein (307 aa).

An ABC transporter domain is found at 5-233 (VQTNGLTKTY…NTEYIELVTP (229 aa)). Residue 37-44 (GPNGAGKT) participates in ATP binding.

This sequence belongs to the ABC transporter superfamily.

This is an uncharacterized protein from Bacillus subtilis (strain 168).